We begin with the raw amino-acid sequence, 129 residues long: Small ribosomal subunit protein uS9 (129 aa).

The disordered stretch occupies residues 98 to 129 (KAQGFLTRDPRKKERKKYGRKKARKSFQFSKR). A compositionally biased stretch (basic residues) spans 110-129 (KERKKYGRKKARKSFQFSKR).

The protein belongs to the universal ribosomal protein uS9 family.

The polypeptide is Small ribosomal subunit protein uS9 (Chlamydia trachomatis serovar L2 (strain ATCC VR-902B / DSM 19102 / 434/Bu)).